A 384-amino-acid polypeptide reads, in one-letter code: S-adenosylmethionine synthase (384 aa).

Residue His-16 coordinates ATP. Residue Asp-18 participates in Mg(2+) binding. Residue Glu-44 participates in K(+) binding. 2 residues coordinate L-methionine: Glu-57 and Gln-100. Positions 100–110 (QSADIAMGVDE) are flexible loop. Residues 165-167 (DAK), Asp-240, 246-247 (RK), Ala-263, and Lys-267 contribute to the ATP site. Position 240 (Asp-240) interacts with L-methionine. Lys-271 contributes to the L-methionine binding site.

This sequence belongs to the AdoMet synthase family. As to quaternary structure, homotetramer; dimer of dimers. The cofactor is Mg(2+). Requires K(+) as cofactor.

It is found in the cytoplasm. The catalysed reaction is L-methionine + ATP + H2O = S-adenosyl-L-methionine + phosphate + diphosphate. It participates in amino-acid biosynthesis; S-adenosyl-L-methionine biosynthesis; S-adenosyl-L-methionine from L-methionine: step 1/1. Its function is as follows. Catalyzes the formation of S-adenosylmethionine (AdoMet) from methionine and ATP. The overall synthetic reaction is composed of two sequential steps, AdoMet formation and the subsequent tripolyphosphate hydrolysis which occurs prior to release of AdoMet from the enzyme. This chain is S-adenosylmethionine synthase, found in Teredinibacter turnerae (strain ATCC 39867 / T7901).